The following is a 432-amino-acid chain: Adenylosuccinate synthetase (432 aa).

GTP is bound by residues 13–19 (GDEGKGK) and 41–43 (GHT). Asp14 (proton acceptor) is an active-site residue. The Mg(2+) site is built by Asp14 and Gly41. Residues 14-17 (DEGK), 39-42 (NAGH), Thr130, Arg144, Gln225, Thr240, and Arg304 contribute to the IMP site. His42 serves as the catalytic Proton donor. 300–306 (ATTGRKR) serves as a coordination point for substrate. GTP is bound by residues Arg306, 332–334 (KLD), and 415–417 (STG).

The protein belongs to the adenylosuccinate synthetase family. As to quaternary structure, homodimer. Mg(2+) is required as a cofactor.

The protein localises to the cytoplasm. It catalyses the reaction IMP + L-aspartate + GTP = N(6)-(1,2-dicarboxyethyl)-AMP + GDP + phosphate + 2 H(+). Its pathway is purine metabolism; AMP biosynthesis via de novo pathway; AMP from IMP: step 1/2. Its function is as follows. Plays an important role in the de novo pathway of purine nucleotide biosynthesis. Catalyzes the first committed step in the biosynthesis of AMP from IMP. This chain is Adenylosuccinate synthetase, found in Photobacterium profundum (strain SS9).